The primary structure comprises 469 residues: Neuraminidase (469 aa).

At 1–9 the chain is on the intravirion side; it reads MNPNQKIIT. Residues 10–30 traverse the membrane as a helical segment; it reads IGSVSLTIATICFLMQIAILV. The interval 11–33 is involved in apical transport and lipid raft association; sequence GSVSLTIATICFLMQIAILVTTV. Over 31-469 the chain is Virion surface; the sequence is TTVTLHFKQY…DGADINLMPI (439 aa). Residues 36 to 88 are hypervariable stalk region; it reads HFKQYECSSPPNNQVMPCEPIIIERNITEIVYLTNTTIDKEICPKLVEYRNWS. Residues N61, N70, and N86 are each glycosylated (N-linked (GlcNAc...) asparagine; by host). Residues 91–469 form a head of neuraminidase region; that stretch reads QCKITGFAPF…DGADINLMPI (379 aa). Disulfide bonds link C92–C417, C124–C129, C183–C230, C232–C237, C278–C291, C280–C289, C318–C337, and C421–C447. Residue R118 participates in substrate binding. A glycan (N-linked (GlcNAc...) asparagine; by host) is linked at N146. Catalysis depends on D151, which acts as the Proton donor/acceptor. Position 152 (R152) interacts with substrate. N-linked (GlcNAc...) asparagine; by host glycosylation is found at N200 and N234. A substrate-binding site is contributed by 276-277; it reads EE. R292 is a binding site for substrate. The Ca(2+) site is built by D293, G297, and D324. R371 serves as a coordination point for substrate. An N-linked (GlcNAc...) asparagine; by host glycan is attached at N402. Y406 (nucleophile) is an active-site residue.

It belongs to the glycosyl hydrolase 34 family. As to quaternary structure, homotetramer. Requires Ca(2+) as cofactor. Post-translationally, N-glycosylated.

Its subcellular location is the virion membrane. It localises to the host apical cell membrane. It catalyses the reaction Hydrolysis of alpha-(2-&gt;3)-, alpha-(2-&gt;6)-, alpha-(2-&gt;8)- glycosidic linkages of terminal sialic acid residues in oligosaccharides, glycoproteins, glycolipids, colominic acid and synthetic substrates.. With respect to regulation, inhibited by the neuraminidase inhibitors zanamivir (Relenza) and oseltamivir (Tamiflu). These drugs interfere with the release of progeny virus from infected cells and are effective against all influenza strains. Resistance to neuraminidase inhibitors is quite rare. Catalyzes the removal of terminal sialic acid residues from viral and cellular glycoconjugates. Cleaves off the terminal sialic acids on the glycosylated HA during virus budding to facilitate virus release. Additionally helps virus spread through the circulation by further removing sialic acids from the cell surface. These cleavages prevent self-aggregation and ensure the efficient spread of the progeny virus from cell to cell. Otherwise, infection would be limited to one round of replication. Described as a receptor-destroying enzyme because it cleaves a terminal sialic acid from the cellular receptors. May facilitate viral invasion of the upper airways by cleaving the sialic acid moieties on the mucin of the airway epithelial cells. Likely to plays a role in the budding process through its association with lipid rafts during intracellular transport. May additionally display a raft-association independent effect on budding. Plays a role in the determination of host range restriction on replication and virulence. Sialidase activity in late endosome/lysosome traffic seems to enhance virus replication. The sequence is that of Neuraminidase from Aves (whales).